The sequence spans 196 residues: Glycerol-3-phosphate acyltransferase (196 aa).

Transmembrane regions (helical) follow at residues 2 to 22 (GWWL…SYLI), 51 to 71 (VVGG…VFIA), 80 to 100 (LVSL…FMKF), 112 to 132 (IIFC…LVIV), and 137 to 156 (YASL…GYLF).

This sequence belongs to the PlsY family. Probably interacts with PlsX.

Its subcellular location is the cell inner membrane. It carries out the reaction an acyl phosphate + sn-glycerol 3-phosphate = a 1-acyl-sn-glycero-3-phosphate + phosphate. It functions in the pathway lipid metabolism; phospholipid metabolism. Functionally, catalyzes the transfer of an acyl group from acyl-phosphate (acyl-PO(4)) to glycerol-3-phosphate (G3P) to form lysophosphatidic acid (LPA). This enzyme utilizes acyl-phosphate as fatty acyl donor, but not acyl-CoA or acyl-ACP. This Thermotoga petrophila (strain ATCC BAA-488 / DSM 13995 / JCM 10881 / RKU-1) protein is Glycerol-3-phosphate acyltransferase.